The sequence spans 4544 residues: Prolow-density lipoprotein receptor-related protein 1 (4544 aa).

The signal sequence occupies residues 1–19 (MLTPPLLLLLPLLSALVAA). Over 20-4419 (AIDAPKTCSP…EHVFSQQQPG (4400 aa)) the chain is Extracellular. LDL-receptor class A domains lie at 25 to 66 (KTCS…ICPQ) and 70 to 110 (QRCQ…HCRE). 6 disulfide bridges follow: Cys-27-Cys-40, Cys-34-Cys-53, Cys-47-Cys-64, Cys-72-Cys-85, Cys-79-Cys-98, and Cys-92-Cys-108. The 39-residue stretch at 111–149 (LQGNCSRLGCQHHCVPTLDGPTCYCNSSFQLQADGKTCK) folds into the EGF-like 1 domain. Asn-114 carries N-linked (GlcNAc...) asparagine glycosylation. 6 cysteine pairs are disulfide-bonded: Cys-115-Cys-124, Cys-120-Cys-133, Cys-135-Cys-148, Cys-154-Cys-164, Cys-160-Cys-173, and Cys-175-Cys-188. Asn-136 carries an N-linked (GlcNAc...) asparagine glycan. The EGF-like 2; calcium-binding domain maps to 150–189 (DFDECSVYGTCSQLCTNTDGSFICGCVEGYLLQPDNRSCK). 3 N-linked (GlcNAc...) asparagine glycosylation sites follow: Asn-185, Asn-239, and Asn-274. LDL-receptor class B repeat units lie at residues 292 to 334 (GNFY…DPAM), 335 to 378 (GKVF…DLVS), and 379 to 422 (RLVY…FENY). Asn-357 carries an N-linked (GlcNAc...) asparagine glycan. A glycan (N-linked (GlcNAc...) asparagine) is linked at Asn-446. The EGF-like 3 domain maps to 474-520 (RSHACENDQYGKPGGCSDICLLANSHKARTCRCRSGFSLGSDGKSCK). Intrachain disulfides connect Cys-478–Cys-493, Cys-489–Cys-504, and Cys-506–Cys-519. LDL-receptor class B repeat units lie at residues 571 to 613 (GFIY…DWMG), 614 to 659 (DNLY…DPLN), 660 to 710 (GWMY…DIPA), and 711 to 754 (GRLY…HGNY). Asn-729 carries N-linked (GlcNAc...) (complex) asparagine glycosylation. Positions 803–843 (GTNKCRVNNGGCSSLCLATPGSRQCACAEDQVLDADGVTCL) constitute an EGF-like 4 domain. 33 cysteine pairs are disulfide-bonded: Cys-807/Cys-818, Cys-814/Cys-827, Cys-829/Cys-842, Cys-854/Cys-866, Cys-861/Cys-879, Cys-873/Cys-890, Cys-895/Cys-907, Cys-902/Cys-920, Cys-914/Cys-931, Cys-936/Cys-948, Cys-943/Cys-961, Cys-955/Cys-971, Cys-976/Cys-989, Cys-984/Cys-1002, Cys-996/Cys-1011, Cys-1015/Cys-1027, Cys-1022/Cys-1040, Cys-1034/Cys-1051, Cys-1062/Cys-1075, Cys-1069/Cys-1088, Cys-1082/Cys-1097, Cys-1104/Cys-1118, Cys-1112/Cys-1131, Cys-1125/Cys-1140, Cys-1145/Cys-1159, Cys-1152/Cys-1172, Cys-1166/Cys-1182, Cys-1185/Cys-1196, Cys-1192/Cys-1206, Cys-1208/Cys-1221, Cys-1227/Cys-1237, Cys-1233/Cys-1246, and Cys-1248/Cys-1261. LDL-receptor class A domains lie at 852–892 (PQCQ…LCHQ), 893–933 (HTCP…TCSA), 934–973 (RTCP…SCAY), 974–1013 (PTCF…GCSH), 1013–1053 (HSCS…NCTN), 1060–1099 (GGCH…SCEG), 1102–1142 (HVCD…NCES), and 1143–1182 (LACR…GELC). 6 residues coordinate Ca(2+): Trp-871, Asp-874, Asp-876, Asp-878, Asp-884, and Glu-885. A glycan (N-linked (GlcNAc...) asparagine) is linked at Asn-928. Ca(2+) contacts are provided by Trp-1032, Asp-1035, Asp-1037, Asp-1039, Asp-1045, and Glu-1046. Asn-1050 carries N-linked (GlcNAc...) asparagine glycosylation. Ca(2+) is bound by residues Trp-1080, Asp-1083, Asp-1085, Asp-1087, Asp-1093, and Glu-1094. N-linked (GlcNAc...) asparagine glycans are attached at residues Asn-1154 and Asn-1155. EGF-like domains follow at residues 1183-1222 (DQCS…HTCQ) and 1223-1262 (IQSY…ESCR). Residues Asn-1195 and Asn-1218 are each glycosylated (N-linked (GlcNAc...) asparagine). LDL-receptor class B repeat units follow at residues 1309–1355 (SALY…DWIA), 1356–1398 (GNIY…DPRD), 1399–1445 (GILF…DYLE), 1446–1490 (KRIL…YGGE), and 1491–1531 (VYWT…YHPS). An N-linked (GlcNAc...) (complex) asparagine glycan is attached at Asn-1511. The EGF-like 7 domain occupies 1536 to 1579 (APNPCEANGGQGPCSHLCLINYNRTVSCACPHLMKLHKDNTTCY). Disulfide bonds link Cys-1540–Cys-1553, Cys-1549–Cys-1563, and Cys-1565–Cys-1578. N-linked (GlcNAc...) asparagine glycans are attached at residues Asn-1558, Asn-1575, Asn-1616, and Asn-1645. LDL-receptor class B repeat units lie at residues 1627-1669 (QRVY…DWVS), 1670-1713 (RNLF…HPLR), 1714-1753 (GKLY…DFPE), and 1754-1798 (SKLY…MGDK). N-linked (GlcNAc...) asparagine glycans are attached at residues Asn-1723, Asn-1733, Asn-1763, and Asn-1825. In terms of domain architecture, EGF-like 8 spans 1846-1887 (GTNPCSVNNGDCSQLCLPTSETTRSCMCTAGYSLRSGQQACE). Disulfide bonds link Cys-1850-Cys-1861, Cys-1857-Cys-1871, and Cys-1873-Cys-1886. N-linked (GlcNAc...) asparagine glycosylation is present at Asn-1933. 4 LDL-receptor class B repeats span residues 1934–1976 (DTIY…DWIA), 1977–2019 (GNIY…HPEK), 2020–2063 (GYLF…DYQD), and 2064–2107 (GKLY…FEDF). The N-linked (GlcNAc...) asparagine glycan is linked to Asn-1995. An N6-acetyllysine modification is found at Lys-2009. Asn-2048 is a glycosylation site (N-linked (GlcNAc...) asparagine). N-linked (GlcNAc...) asparagine glycans are attached at residues Asn-2117 and Asn-2127. Positions 2155-2195 (GTNVCAVANGGCQQLCLYRGRGQRACACAHGMLAEDGASCR) constitute an EGF-like 9 domain. 3 cysteine pairs are disulfide-bonded: Cys-2159-Cys-2170, Cys-2166-Cys-2180, and Cys-2182-Cys-2194. LDL-receptor class B repeat units follow at residues 2253–2294 (NRIF…HRGW), 2295–2343 (DTLY…DECQ), 2344–2388 (NLMF…DHRA), 2389–2431 (EKLY…YGEH), and 2432–2473 (IFWT…VAND). The N-linked (GlcNAc...) asparagine glycan is linked to Asn-2472. In terms of domain architecture, EGF-like 10 spans 2478-2518 (ELSPCRINNGGCQDLCLLTHQGHVNCSCRGGRILQDDLTCR). 3 cysteine pairs are disulfide-bonded: Cys-2482–Cys-2493, Cys-2489–Cys-2503, and Cys-2505–Cys-2517. Asn-2502 carries an N-linked (GlcNAc...) asparagine glycan. Asn-2521 is a glycosylation site (N-linked (GlcNAc...) asparagine). LDL-receptor class A domains lie at 2522-2563 (SSCR…YCNS), 2564-2602 (RRCK…PCNK), 2603-2641 (TACG…NCSA), 2642-2690 (TDCS…DCPG), 2694-2732 (PRCP…HCNK), 2732-2771 (KFCS…HCEG), and 2772-2814 (KTCG…GCLY). Disulfide bonds link Cys-2524–Cys-2537, Cys-2532–Cys-2550, Cys-2544–Cys-2561, Cys-2566–Cys-2578, Cys-2573–Cys-2591, and Cys-2585–Cys-2600. Asn-2539 carries an N-linked (GlcNAc...) asparagine glycan. Residue Asn-2601 is glycosylated (N-linked (GlcNAc...) asparagine). Cystine bridges form between Cys-2605/Cys-2617, Cys-2612/Cys-2630, Cys-2624/Cys-2639, Cys-2644/Cys-2666, Cys-2660/Cys-2679, Cys-2673/Cys-2688, Cys-2696/Cys-2708, Cys-2703/Cys-2721, Cys-2715/Cys-2730, Cys-2734/Cys-2746, Cys-2741/Cys-2759, Cys-2753/Cys-2769, Cys-2774/Cys-2787, Cys-2781/Cys-2800, and Cys-2794/Cys-2812. 2 N-linked (GlcNAc...) asparagine glycosylation sites follow: Asn-2620 and Asn-2638. N-linked (GlcNAc...) asparagine glycosylation occurs at Asn-2815. 3 consecutive LDL-receptor class A domains span residues 2816–2855 (STCD…ECEY), 2856–2899 (PTCG…HCTS), and 2902–2940 (HKCN…RGCH). Intrachain disulfides connect Cys-2818–Cys-2830, Cys-2825–Cys-2843, Cys-2837–Cys-2853, Cys-2858–Cys-2870, Cys-2865–Cys-2884, Cys-2878–Cys-2897, Cys-2904–Cys-2917, Cys-2912–Cys-2930, Cys-2924–Cys-2939, Cys-2944–Cys-2956, Cys-2952–Cys-2965, Cys-2967–Cys-2980, Cys-2986–Cys-2996, Cys-2992–Cys-3005, and Cys-3007–Cys-3021. Asn-2905 carries N-linked (GlcNAc...) asparagine glycosylation. The 41-residue stretch at 2941–2981 (INECLSRKLSGCSQDCEDLKIGFKCRCRPGFRLKDDGRTCA) folds into the EGF-like 11 domain. The EGF-like 12; calcium-binding domain maps to 2982-3022 (DVDECSTTFPCSQRCINTHGSYKCLCVEGYAPRGGDPHSCK). N-linked (GlcNAc...) asparagine glycans are attached at residues Asn-3048 and Asn-3089. LDL-receptor class B repeat units lie at residues 3069–3113 (QMIY…DWVG), 3114–3156 (GNLY…DVQN), 3157–3200 (GYLY…DYVT), 3201–3243 (ERIY…FEDY), and 3244–3284 (VYWT…FHAL). Residue Asn-3264 is glycosylated (N-linked (GlcNAc...) asparagine). The 42-residue stretch at 3290–3331 (PNHPCKVNNGGCSNLCLLSPGGGHKCACPTNFYLGSDGRTCV) folds into the EGF-like 13 domain. 3 disulfides stabilise this stretch: Cys-3294–Cys-3305, Cys-3301–Cys-3315, and Cys-3317–Cys-3330. 11 consecutive LDL-receptor class A domains span residues 3332–3371 (SNCT…DCPE), 3372–3410 (FKCR…NCDI), 3411–3450 (HVCL…DCPE), 3451–3491 (VTCA…NCTQ), 3492–3533 (MTCG…ECDE), 3534–3572 (RTCE…SCTP), 3573–3611 (RPCS…DCTP), 3611–3649 (PRCD…ACGT), 3652–3692 (RTCP…ECAR), 3693–3733 (FVCP…DCEP), and 3739–3778 (THCK…DCSI). Asn-3333 is a glycosylation site (N-linked (GlcNAc...) asparagine). Cystine bridges form between Cys-3334–Cys-3346, Cys-3341–Cys-3359, Cys-3353–Cys-3369, Cys-3374–Cys-3386, Cys-3381–Cys-3399, Cys-3393–Cys-3408, Cys-3413–Cys-3426, Cys-3420–Cys-3439, Cys-3433–Cys-3448, Cys-3453–Cys-3466, Cys-3460–Cys-3479, Cys-3473–Cys-3489, Cys-3494–Cys-3507, Cys-3501–Cys-3520, Cys-3514–Cys-3531, Cys-3536–Cys-3548, Cys-3543–Cys-3561, Cys-3555–Cys-3570, Cys-3575–Cys-3587, Cys-3582–Cys-3600, Cys-3594–Cys-3609, Cys-3613–Cys-3625, Cys-3620–Cys-3638, Cys-3632–Cys-3647, Cys-3654–Cys-3666, Cys-3661–Cys-3679, Cys-3673–Cys-3690, Cys-3695–Cys-3709, Cys-3703–Cys-3722, Cys-3716–Cys-3731, Cys-3741–Cys-3754, Cys-3749–Cys-3767, Cys-3761–Cys-3776, Cys-3785–Cys-3798, Cys-3792–Cys-3807, Cys-3809–Cys-3822, Cys-3828–Cys-3838, Cys-3834–Cys-3847, and Cys-3849–Cys-3860. Asn-3488 carries N-linked (GlcNAc...) asparagine glycosylation. Asn-3662 is a glycosylation site (N-linked (GlcNAc...) asparagine). 2 EGF-like domains span residues 3781-3823 (KLTS…PGCQ) and 3824-3861 (DINE…NTCK). Asn-3788 carries N-linked (GlcNAc...) asparagine glycosylation. The N-linked (GlcNAc...) asparagine glycan is linked to Asn-3839. LDL-receptor class B repeat units follow at residues 3912–3954 (GRVY…HLNI), 3970–4012 (GNVY…DPLR), 4013–4056 (GTMY…DYHN), and 4057–4101 (ERLY…FEDY). The Recognition site for proteolytical processing signature appears at 3940-3943 (RHRR). N-linked (GlcNAc...) asparagine glycosylation is present at Asn-3953. N-linked (GlcNAc...) asparagine glycans are attached at residues Asn-4075 and Asn-4125. EGF-like domains follow at residues 4147–4183 (VTNP…GTCV), 4196–4232 (RPGT…DKCE), 4232–4268 (ELDQ…PKCT), 4268–4304 (TQQV…DRCQ), 4304–4340 (QYRQ…SRCE), 4340–4375 (EVNK…PSCL), and 4373–4409 (SCLT…PRCE). Intrachain disulfides connect Cys-4151–Cys-4160, Cys-4156–Cys-4169, Cys-4171–Cys-4182, Cys-4200–Cys-4210, Cys-4204–Cys-4220, Cys-4222–Cys-4231, Cys-4236–Cys-4246, Cys-4240–Cys-4256, Cys-4258–Cys-4267, Cys-4272–Cys-4282, Cys-4276–Cys-4292, Cys-4294–Cys-4303, Cys-4308–Cys-4318, Cys-4312–Cys-4328, Cys-4330–Cys-4339, Cys-4344–Cys-4352, and Cys-4347–Cys-4363. Asn-4179 is a glycosylation site (N-linked (GlcNAc...) asparagine). Residues Asn-4278 and Asn-4279 are each glycosylated (N-linked (GlcNAc...) asparagine). The N-linked (GlcNAc...) asparagine glycan is linked to Asn-4364. 4 disulfide bridges follow: Cys-4365–Cys-4374, Cys-4377–Cys-4387, Cys-4381–Cys-4397, and Cys-4399–Cys-4408. The chain crosses the membrane as a helical span at residues 4420–4444 (HIASILIPLLLLLLLVLVAGVVFWY). Residues 4445-4544 (KRRVQGAKGF…PEDEIGDPLA (100 aa)) are Cytoplasmic-facing. Positions 4445–4544 (KRRVQGAKGF…PEDEIGDPLA (100 aa)) are interaction with MAFB. Residue Thr-4460 is modified to Phosphothreonine. An NPXY motif motif is present at residues 4502–4507 (FTNPVY). Tyr-4507 is subject to Phosphotyrosine. 3 positions are modified to phosphoserine: Ser-4517, Ser-4520, and Ser-4523.

The protein belongs to the LDLR family. As to quaternary structure, heterodimer of an 85-kDa membrane-bound carboxyl subunit and a non-covalently attached 515-kDa N-terminal subunit. Intracellular domain interacts with MAFB. Found in a complex with PID1/PCLI1, LRP1 and CUBNI. Interacts with SNX17, PID1/PCLI1, PDGF and CUBN. The intracellular domain interacts with SHC1, GULP1 and DAB1. Can weakly interact (via NPXY motif) with DAB2 (via PID domain); the interaction is enhanced by tyrosine phosphorylation of the NPXY motif. Interacts with MDK; promotes neuronal survival. Interacts with LRPAP1; this interaction is followed by rapid internalization. Interacts with uPA/PLAU and PAI1/SERPINE1, either individually or in complex with each other, leading to rapid endocytosis; this interaction is abolished in the presence of LRPAP1/RAP. Also interacts with tPA/PLAT alone or in complex with SERPINE1. Interacts with the urokinase receptor PLAUR; this interaction leads to PLAUR internalization and is impaired in the presence of SORL1. Interacts with PDGFB. Interacts with TAU/MAPT, leading to endocytosis; this interaction is reduced in the presence of LRPAP1/RAP. Interacts with IGFBP3; this interaction mediates cell growth inhibition independently of IGF1. Interacts with ADGRG6. In terms of assembly, (Microbial infection) Interacts with bacterial exotoxins. (Microbial infection) Interacts with Rift valley fever virus (RVFV) glycoprotein N; this interaction facilitates virus entry. In terms of processing, cleaved into a 85 kDa membrane-spanning subunit (LRP-85) and a 515 kDa large extracellular domain (LRP-515) that remains non-covalently associated. Gamma-secretase-dependent cleavage of LRP-85 releases the intracellular domain from the membrane. The N-terminus is blocked. Post-translationally, phosphorylated on serine and threonine residues. In terms of processing, phosphorylated on tyrosine residues upon stimulation with PDGF. Tyrosine phosphorylation promotes interaction with SHC1. In terms of tissue distribution, most abundant in liver, brain and lung.

It localises to the cell membrane. The protein resides in the membrane. The protein localises to the coated pit. It is found in the cytoplasm. Its subcellular location is the nucleus. It localises to the golgi outpost. The protein resides in the cytoskeleton. The protein localises to the microtubule organizing center. Functionally, endocytic receptor involved in endocytosis and in phagocytosis of apoptotic cells. Required for early embryonic development. Involved in cellular lipid homeostasis. Involved in the plasma clearance of chylomicron remnants and activated LRPAP1 (alpha 2-macroglobulin), as well as the local metabolism of complexes between plasminogen activators and their endogenous inhibitors. Acts as an LRPAP1 alpha-2-macroglobulin receptor. Acts as TAU/MAPT receptor and controls the endocytosis of TAU/MAPT as well as its subsequent spread. May modulate cellular events, such as APP metabolism, kinase-dependent intracellular signaling, neuronal calcium signaling as well as neurotransmission. Also acts as a receptor for IGFBP3 to mediate cell growth inhibition. Its function is as follows. (Microbial infection) Functions as a receptor for Pseudomonas aeruginosa exotoxin A. In Homo sapiens (Human), this protein is Prolow-density lipoprotein receptor-related protein 1.